We begin with the raw amino-acid sequence, 744 residues long: MAGRRAMRPSGSSMRGVVARLAAARSPAVSFLVAAAAGAALVGGVYFWLVVSSFRLPDSRAVGCLPDGEGSWAIGMYYGKSPLELRPIELEGRSNGNSSAWPVANPVLTCATPTEGGYPSNFVADPFLYVQGDTLFLFFETKTVSTMQGDIGVARSLDQGATWEFLGIALDEAWHLSYPFVFKYENEIYMMPEGNKKKELRLYRATKFPLEWTLEKVLIDKPLIDSSLVQYDGLWWLFASDFTRHGIEKNAELEIWYSNSPLGPWSEHKQNPIYRSDKSLGARNGGRLFIFEGSLYRPGQDCSGTYGRKVKLYKIEKLTKEEYKEVPVNLGIEEAKKGRNAWNGMRYHHIDAQQLASGGWVAVMDGDRVPSGDSTRRSLFGYMGFLVAVALVTFVGFVKGAISCYIPPSFWVPLTRRSELSRILPVHRFNLKIRRYSTSIGRNISATKARLSEKTWSNTLFFCVIALIGIVNVCIAVHFLLGGNGAEEAYTHQGQHSQFTMVTMTYEARLWNLKLFVEHYSRCESVREIVVVWNKGNHPTSDAFDSTVPVRIRVEEINSLNNRFRGDPLIKTRAVLELDDDIMMTCSDVEKGFKVWREHPERMVGFYPRMIDGDPLQYRNERYARGKKGYNLILTGAAFMDSEFAFSKYWSQEAKEGRDYVHKNFNCEDLLMNFLYANASSSRTVEYVHPAWAIDTSKLSSVAISRDTQKHYDIRTKCLAKFASIYGPLPQKWLFGMREDGWDK.

Transmembrane regions (helical) follow at residues phenylalanine 31–valine 51, serine 378–valine 398, and leucine 460–leucine 480. Residues asparagine 534, asparagine 558 to arginine 563, aspartate 579 to aspartate 581, arginine 609, and phenylalanine 665 to aspartate 669 each bind substrate. Position 581 (aspartate 581) interacts with Mn(2+). Cysteines 667 and 718 form a disulfide. Aspartate 669 is an active-site residue.

This sequence belongs to the glycosyltransferase 64 family. Requires Mn(2+) as cofactor. Highly expressed in almost all tissues.

Its subcellular location is the membrane. Its pathway is sphingolipid metabolism. Essential protein. Glycosyltransferase that mediates the glycosylation of glycosylinositol phosphorylceramides (GIPCs), the major sphingolipids in the plasma membrane; acts as a HexN(Ac)-specific GIPC sugar transferase. Responsible for the glycosylation of a subgroup of GIPCs found in seeds and pollen that contain GlcNAc and GlcN (GlcN(Ac)). Maybe involved in the maintenance of cell-cell adhesion. The sequence is that of Glucosamine inositolphosphorylceramide transferase 1 from Oryza sativa subsp. japonica (Rice).